The primary structure comprises 556 residues: Endonuclease/exonuclease/phosphatase family domain-containing protein 1 (556 aa).

A HhH domain is found at 39–68; that stretch reads ERLNINTATEEELMTLPGVTRQVAQNIVEY.

This is Endonuclease/exonuclease/phosphatase family domain-containing protein 1 (eepd1) from Xenopus laevis (African clawed frog).